The following is a 462-amino-acid chain: Metal cation symporter ZIP8 (462 aa).

The signal sequence occupies residues 1–19; the sequence is MAPGRAVAGLLLLAATSLG. Topologically, residues 20–132 are extracellular; sequence HPSEGPELAF…PSLSEVWGYG (113 aa). 3 N-linked (GlcNAc...) asparagine glycosylation sites follow: asparagine 40, asparagine 88, and asparagine 96. Residues 133–153 form a helical membrane-spanning segment; it reads FLSVTIINLASLLGLILTPLI. Topologically, residues 154 to 160 are cytoplasmic; it reads KKSYFPK. A helical transmembrane segment spans residues 161-181; the sequence is ILTYFVGLAIGTLFSNAIFQL. At 182–191 the chain is on the extracellular side; sequence IPEAFGFNPK. A helical transmembrane segment spans residues 192-212; sequence IDNYVEKAVAVFGGFYMLFFV. Residues 213-367 are Cytoplasmic-facing; the sequence is ERTLKMLLKT…LNAGMSTRQA (155 aa). The XEXPHE-motif motif lies at 345-350; the sequence is EEFPHE. A helical transmembrane segment spans residues 368-388; sequence LLFNFLSACSCYVGLAFGILV. The Extracellular portion of the chain corresponds to 389–390; it reads GN. Residues 391–411 form a helical membrane-spanning segment; that stretch reads NFAPNIIFALAGGMFLYISLA. Residues 412–431 are Cytoplasmic-facing; it reads DMFPEMNDMLREKVTGRQTD. A helical membrane pass occupies residues 432–452; it reads FTFFMIQNAGMLTGFTAILLI. The Extracellular portion of the chain corresponds to 453-462; sequence TLYAGDIELQ.

The protein belongs to the ZIP transporter (TC 2.A.5) family. As to quaternary structure, homodimer. In terms of processing, N-glycosylated. N-glycosylation is not required for proper iron and zinc transport. Ubiquitously expressed.

It localises to the cell membrane. It is found in the apical cell membrane. Its subcellular location is the basolateral cell membrane. The protein resides in the lysosome membrane. It catalyses the reaction Zn(2+)(out) + 2 hydrogencarbonate(out) = Zn(2+)(in) + 2 hydrogencarbonate(in). It carries out the reaction selenite(out) + Zn(2+)(out) + hydrogencarbonate(out) = selenite(in) + Zn(2+)(in) + hydrogencarbonate(in). The enzyme catalyses Mn(2+)(out) + 2 hydrogencarbonate(out) = Mn(2+)(in) + 2 hydrogencarbonate(in). The catalysed reaction is Cd(2+)(out) + 2 hydrogencarbonate(out) = Cd(2+)(in) + 2 hydrogencarbonate(in). It catalyses the reaction Fe(2+)(out) + 2 hydrogencarbonate(out) = Fe(2+)(in) + 2 hydrogencarbonate(in). It carries out the reaction Co(2+)(out) + 2 hydrogencarbonate(out) = Co(2+)(in) + 2 hydrogencarbonate(in). In terms of biological role, electroneutral divalent metal cation:bicarbonate symporter of the plasma membrane mediating the cellular uptake of zinc and manganese, two divalent metal cations important for development, tissue homeostasis and immunity. Transports an electroneutral complex composed of a divalent metal cation and two bicarbonate anions or alternatively a bicarbonate and a selenite anion. Thereby, it also contributes to the cellular uptake of selenium, an essential trace metal and micronutrient. Also imports cadmium a non-essential metal which is cytotoxic and carcinogenic. May also transport iron and cobalt through membranes. Through zinc import, indirectly regulates the metal-dependent transcription factor MTF1 and the expression of some metalloproteases involved in cartilage catabolism and also probably heart development. Also indirectly regulates the expression of proteins involved in cell morphology and cytoskeleton organization. Indirectly controls innate immune function and inflammatory response by regulating zinc cellular uptake which in turn modulates the expression of genes specific of these processes. Protects, for instance, cells from injury and death at the onset of inflammation. By regulating zinc influx into monocytes also directly modulates their adhesion to endothelial cells and arteries. Reclaims manganese from the bile at the apical membrane of hepatocytes, thereby regulating the activity of the manganese-dependent enzymes through the systemic levels of the nutrient. Also participates in manganese reabsorption in the proximal tubule of the kidney. By mediating the extracellular uptake of manganese by cells of the blood-brain barrier, may also play a role in the transport of the micronutrient to the brain. With manganese cellular uptake also participates in mitochondrial proper function. Finally, also probably functions intracellularly, translocating zinc from lysosome to cytosol to indirectly enhance the expression of specific genes during TCR-mediated T cell activation. In Mus musculus (Mouse), this protein is Metal cation symporter ZIP8.